Consider the following 352-residue polypeptide: Protein RecA (352 aa).

67-74 (GPESSGKT) serves as a coordination point for ATP. Positions 332 to 352 (VKPADAESKEDSPKLKAVDGF) are disordered. Basic and acidic residues predominate over residues 335-352 (ADAESKEDSPKLKAVDGF).

This sequence belongs to the RecA family.

It localises to the cytoplasm. Can catalyze the hydrolysis of ATP in the presence of single-stranded DNA, the ATP-dependent uptake of single-stranded DNA by duplex DNA, and the ATP-dependent hybridization of homologous single-stranded DNAs. It interacts with LexA causing its activation and leading to its autocatalytic cleavage. This is Protein RecA from Pseudarthrobacter chlorophenolicus (strain ATCC 700700 / DSM 12829 / CIP 107037 / JCM 12360 / KCTC 9906 / NCIMB 13794 / A6) (Arthrobacter chlorophenolicus).